The primary structure comprises 424 residues: CAAX prenyl protease 1 homolog (424 aa).

5 helical membrane passes run 3–23, 67–87, 109–129, 155–175, and 185–205; these read IPFMETVVGFMIVMYIFETYL, EFVTILMDSAILFFGILPWFW, LSFLAGVMTWSQITDLPFSLY, GTFLSVILGPPIVAAIIFIVQ, and LWAFMFILSLVMMTIYPVLIA. Zn(2+) is bound at residue His-284. Glu-285 is a catalytic residue. A Zn(2+)-binding site is contributed by His-288. The next 2 membrane-spanning stretches (helical) occupy residues 295–315 and 332–352; these read TYSFIAVQILAFLQFGGYTLV and VLIGLIIFQHTVIPLQHLVSF. Residue Glu-362 participates in Zn(2+) binding. Asp-366 functions as the Proton donor in the catalytic mechanism.

The protein belongs to the peptidase M48A family. Requires Zn(2+) as cofactor. Expressed in leaves, stems and flowers.

The protein resides in the endoplasmic reticulum membrane. It carries out the reaction Hydrolyzes the peptide bond -P2-(S-farnesyl or geranylgeranyl)C-P1'-P2'-P3'-COOH where P1' and P2' are amino acids with aliphatic side chains and P3' is any C-terminal residue.. In terms of biological role, proteolytically removes the C-terminal three residues of farnesylated proteins. The substrate specificity is only partially overlapping with that of FACE2. The protein is CAAX prenyl protease 1 homolog (FACE1) of Arabidopsis thaliana (Mouse-ear cress).